Here is an 861-residue protein sequence, read N- to C-terminus: Glucans biosynthesis glucosyltransferase H (861 aa).

The next 6 helical transmembrane spans lie at 142–162 (FILLLLMLAQTSVATYYMKGI), 188–208 (VLPYVIQFGILALFAILFCWV), 516–536 (VFLTGVMSYLSAPLWFFFLVL), 573–593 (LFSTTLTLLFLPKLLSVMLIW), 600–620 (FGGVIRVTLSMLLEMFFSVLL), and 683–703 (FLWWLSPIVGSLILSIPVSVI).

It belongs to the glycosyltransferase 2 family. OpgH subfamily.

It is found in the cell inner membrane. It participates in glycan metabolism; osmoregulated periplasmic glucan (OPG) biosynthesis. In terms of biological role, involved in the biosynthesis of osmoregulated periplasmic glucans (OPGs). This chain is Glucans biosynthesis glucosyltransferase H, found in Pseudomonas aeruginosa (strain LESB58).